Here is a 589-residue protein sequence, read N- to C-terminus: V-type ATP synthase alpha chain (589 aa).

232–239 (GPFGSGKT) serves as a coordination point for ATP.

The protein belongs to the ATPase alpha/beta chains family.

It catalyses the reaction ATP + H2O + 4 H(+)(in) = ADP + phosphate + 5 H(+)(out). Its function is as follows. Produces ATP from ADP in the presence of a proton gradient across the membrane. The V-type alpha chain is a catalytic subunit. The sequence is that of V-type ATP synthase alpha chain from Acetivibrio thermocellus (strain ATCC 27405 / DSM 1237 / JCM 9322 / NBRC 103400 / NCIMB 10682 / NRRL B-4536 / VPI 7372) (Clostridium thermocellum).